We begin with the raw amino-acid sequence, 569 residues long: MSYKIDRKTYAQTYGPTTGDRVRLADTELFIEVEKDLTTYGDEVKFGGGKVIRDGMGQSQVRRADGAVDTVITNALIVDWWGIIKADVGIKDGMIFEIGKAGNPDIQDNVDIVIGASTEVIAGEGHILTAGSIDTHIHFICPQQIETALSSGITTMLGGGTGPATGTNATTCTPGSFHISRMLQSAEAFPMNLGFFGKGNSTNEINLIDQVEAGACGLKLHEDWGTTPSTINSCLNVADKFDVQVCIHTDTLNEAGFVEDTINAIAGRTIHTFHTEGAGGGHAPDIIKICGEKNVLPSSTNPTRPYTRNTLEEHLDMLMVCHHLDSKIPEDIAFAESRIRRETIAAEDILHDLGAFSIIASDSQAMGRVGEVITRTFQTAHKMKVQRGPLSQDSDRNDNYRVKRYISKVTINPAIAHGIDKHVGSIEKGKIADLVLWKPSFFAVKPELVVKGGSIVWSQMGDANASIPTPGPVHGRPMFASFGQSLIKSSFTFLSKNSIEQNIPNKLGLQKKCIAVENTRNINKSNLKLNTKLPNISVDPQTYEVFSDGELLTCEPLDEVPMAQRYFLL.

The region spanning 131–569 (GSIDTHIHFI…VPMAQRYFLL (439 aa)) is the Urease domain. Ni(2+)-binding residues include His-136, His-138, and Lys-219. An N6-carboxylysine modification is found at Lys-219. His-221 is a binding site for substrate. Ni(2+)-binding residues include His-248 and His-274. His-322 serves as the catalytic Proton donor. Residue Asp-362 participates in Ni(2+) binding.

Belongs to the metallo-dependent hydrolases superfamily. Urease alpha subunit family. As to quaternary structure, heterotrimer of UreA (gamma), UreB (beta) and UreC (alpha) subunits. Three heterotrimers associate to form the active enzyme. It depends on Ni cation as a cofactor. Post-translationally, carboxylation allows a single lysine to coordinate two nickel ions.

It is found in the cytoplasm. The enzyme catalyses urea + 2 H2O + H(+) = hydrogencarbonate + 2 NH4(+). The protein operates within nitrogen metabolism; urea degradation; CO(2) and NH(3) from urea (urease route): step 1/1. In Prochlorococcus marinus (strain AS9601), this protein is Urease subunit alpha.